We begin with the raw amino-acid sequence, 236 residues long: UPF0257 lipoprotein YnfC (236 aa).

The signal sequence occupies residues 1-16 (MKYKLLPCLLAILLTG). Cys-17 carries N-palmitoyl cysteine lipidation. Cys-17 is lipidated: S-diacylglycerol cysteine.

It belongs to the UPF0257 family.

Its subcellular location is the cell membrane. The polypeptide is UPF0257 lipoprotein YnfC (Escherichia coli O45:K1 (strain S88 / ExPEC)).